The sequence spans 514 residues: Histidine ammonia-lyase (514 aa).

The 5-imidazolinone (Cys-Gly) cross-link spans 143–145 (CSG). A 2,3-didehydroalanine (Ser) modification is found at Ser-144.

Belongs to the PAL/histidase family. Post-translationally, contains an active site 4-methylidene-imidazol-5-one (MIO), which is formed autocatalytically by cyclization and dehydration of residues Cys-Ser-Gly.

The protein resides in the cytoplasm. It catalyses the reaction L-histidine = trans-urocanate + NH4(+). It functions in the pathway amino-acid degradation; L-histidine degradation into L-glutamate; N-formimidoyl-L-glutamate from L-histidine: step 1/3. The sequence is that of Histidine ammonia-lyase (hutH) from Streptomyces griseus.